Here is a 297-residue protein sequence, read N- to C-terminus: MEDYIKIEKIGEGTYGVVYKGRHRTTGQIVAMKKIRLESEEEGVPSTAIREISLLKELRHPNIVSLQDVLMQDSRLYLIFEFLSMDLKKYLDSIPPGQFMDSSLVKSYLYQILQGIVFCHSRRVLHRDLKPQNLLIDDKGTIKLADFGLARAFGIPIRVYTHEVVTLWYRSPEVLLGSARYSTPVDIWSIGTIFAELATKKPLFHGDSEIDQLFRIFRALGTPNNEVWPEVESLQDYKNTFPKWKPGSLASHVKNLDENGLDLLSKMLVYDPAKRISGKMALKHPYFDDLDNQIKKM.

Residue Met-1 is modified to N-acetylmethionine. Tyr-4 is modified (phosphotyrosine; by PKR). The region spanning Tyr-4–Phe-287 is the Protein kinase domain. N6-acetyllysine; alternate is present on residues Lys-6 and Lys-9. Residues Lys-6 and Lys-9 each participate in a glycyl lysine isopeptide (Lys-Gly) (interchain with G-Cter in SUMO2); alternate cross-link. Ile-10–Val-18 contacts ATP. Thr-14 carries the post-translational modification Phosphothreonine; by PKMYT1. At Tyr-15 the chain carries Phosphotyrosine; by PKMYT1, WEE1, WEE2 and PKC/PRKCD. Tyr-15 carries the phosphotyrosine; by WEE1 and WEE2 modification. Residue Tyr-19 is modified to Phosphotyrosine. Lys-20 is covalently cross-linked (Glycyl lysine isopeptide (Lys-Gly) (interchain with G-Cter in SUMO2)). Lys-33 contacts ATP. Residue Ser-39 is modified to Phosphoserine. A Phosphotyrosine modification is found at Tyr-77. Asp-128 functions as the Proton acceptor in the catalytic mechanism. Residue Lys-139 forms a Glycyl lysine isopeptide (Lys-Gly) (interchain with G-Cter in SUMO2) linkage. Position 141 is a phosphothreonine (Thr-141). Thr-161 is subject to Phosphothreonine; by CAK. Ser-178 carries the post-translational modification Phosphoserine. Thr-222 bears the Phosphothreonine mark. An N6-succinyllysine modification is found at Lys-245. At Ser-248 the chain carries Phosphoserine.

The protein belongs to the protein kinase superfamily. CMGC Ser/Thr protein kinase family. CDC2/CDKX subfamily. In terms of assembly, forms a stable but non-covalent complex with a regulatory subunit and with a cyclin. Interacts with cyclins-B (CCNB1, CCNB2 and CCNB3) to form a serine/threonine kinase holoenzyme complex also known as maturation promoting factor (MPF). The cyclin subunit imparts substrate specificity to the complex. Can also form CDK1-cylin-D and CDK1-cyclin-E complexes that phosphorylate RB1 in vitro. Binds to RB1 and other transcription factors such as FOXO1 and RUNX2. Promotes G2-M transition when in complex with a cyclin-B. Interacts with DLGAP5. Binds to the CDK inhibitors CDKN1A/p21 and CDKN1B/p27. Isoform 2 is unable to complex with cyclin-B1 and also fails to bind to CDKN1A/p21. Interacts with catalytically active CCNB1 and RALBP1 during mitosis to form an endocytotic complex during interphase. Associates with cyclins-A and B1 during S-phase in regenerating hepatocytes. Interacts with FANCC. Interacts with CEP63; this interaction recruits CDK1 to centrosomes. Interacts with CENPA. Interacts with NR1D1. Interacts with proteasome subunit PSMA8; to participate in meiosis progression during spermatogenesis. Phosphorylation at Thr-161 by CAK/CDK7 activates kinase activity. Phosphorylation at Thr-14 and Tyr-15 by PKMYT1 prevents nuclear translocation. Phosphorylation at Tyr-15 by WEE1 and WEE2 inhibits the protein kinase activity and acts as a negative regulator of entry into mitosis (G2 to M transition). Phosphorylation by PKMYT1 and WEE1 takes place during mitosis to keep CDK1-cyclin-B complexes inactive until the end of G2. By the end of G2, PKMYT1 and WEE1 are inactivated, but CDC25A and CDC25B are activated. Dephosphorylation by active CDC25A and CDC25B at Thr-14 and Tyr-15, leads to CDK1 activation at the G2-M transition. Phosphorylation at Tyr-15 by WEE2 during oogenesis is required to maintain meiotic arrest in oocytes during the germinal vesicle (GV) stage, a long period of quiescence at dictyate prophase I, leading to prevent meiotic reentry. Phosphorylation by WEE2 is also required for metaphase II exit during egg activation to ensure exit from meiosis in oocytes and promote pronuclear formation. Phosphorylated at Tyr-4 by PKR/EIF2AK2 upon genotoxic stress. This phosphorylation triggers CDK1 polyubiquitination and subsequent proteolysis, thus leading to G2 arrest. In response to UV irradiation, phosphorylation at Tyr-15 by PRKCD activates the G2/M DNA damage checkpoint. In terms of processing, polyubiquitinated upon genotoxic stress.

It is found in the nucleus. The protein resides in the cytoplasm. It localises to the mitochondrion. Its subcellular location is the cytoskeleton. The protein localises to the microtubule organizing center. It is found in the centrosome. The protein resides in the spindle. It catalyses the reaction L-seryl-[protein] + ATP = O-phospho-L-seryl-[protein] + ADP + H(+). The catalysed reaction is L-threonyl-[protein] + ATP = O-phospho-L-threonyl-[protein] + ADP + H(+). It carries out the reaction [DNA-directed RNA polymerase] + ATP = phospho-[DNA-directed RNA polymerase] + ADP + H(+). Its activity is regulated as follows. Phosphorylation at Thr-14 or Tyr-15 inactivates the enzyme, while phosphorylation at Thr-161 activates it. Activated through a multistep process; binding to cyclin-B is required for relocation of cyclin-kinase complexes to the nucleus, activated by CAK/CDK7-mediated phosphorylation on Thr-161, and CDC25-mediated dephosphorylation of inhibitory phosphorylation on Thr-14 and Tyr-15. Activity is restricted during S-phase in an ATR-dependent manner to prevent premature entry into G2. Repressed by the CDK inhibitors CDKN1A/p21 and CDKN1B/p27 during the G1 phase and by CDKN1A/p21 at the G1-S checkpoint upon DNA damage. Transient activation by rapid and transient dephosphorylation at Tyr-15 triggered by TGFB1. In terms of biological role, plays a key role in the control of the eukaryotic cell cycle by modulating the centrosome cycle as well as mitotic onset; promotes G2-M transition via association with multiple interphase cyclins. Phosphorylates PARVA/actopaxin, APC, AMPH, APC, BARD1, Bcl-xL/BCL2L1, BRCA2, CALD1, CASP8, CDC7, CDC20, CDC25A, CDC25C, CC2D1A, CENPA, CSNK2 proteins/CKII, FZR1/CDH1, CDK7, CEBPB, CHAMP1, DMD/dystrophin, EEF1 proteins/EF-1, EZH2, KIF11/EG5, EGFR, FANCG, FOS, GFAP, GOLGA2/GM130, GRASP1, UBE2A/hHR6A, HIST1H1 proteins/histone H1, HMGA1, HIVEP3/KRC, KAT5, LMNA, LMNB, LBR, MKI67, LATS1, MAP1B, MAP4, MARCKS, MCM2, MCM4, MKLP1, MLST8, MYB, NEFH, NFIC, NPC/nuclear pore complex, PITPNM1/NIR2, NPM1, NCL, NUCKS1, NPM1/numatrin, ORC1, PRKAR2A, EEF1E1/p18, EIF3F/p47, p53/TP53, NONO/p54NRB, PAPOLA, PLEC/plectin, RB1, TPPP, UL40/R2, RAB4A, RAP1GAP, RBBP8/CtIP, RCC1, RPS6KB1/S6K1, KHDRBS1/SAM68, ESPL1, SKI, BIRC5/survivin, STIP1, TEX14, beta-tubulins, MAPT/TAU, NEDD1, VIM/vimentin, TK1, FOXO1, RUNX1/AML1, SAMHD1, SIRT2, CGAS, ZAR1 and RUNX2. CDK1/CDC2-cyclin-B controls pronuclear union in interphase fertilized eggs. Essential for early stages of embryonic development. During G2 and early mitosis, CDC25A/B/C-mediated dephosphorylation activates CDK1/cyclin complexes which phosphorylate several substrates that trigger at least centrosome separation, Golgi dynamics, nuclear envelope breakdown and chromosome condensation. Once chromosomes are condensed and aligned at the metaphase plate, CDK1 activity is switched off by WEE1- and PKMYT1-mediated phosphorylation to allow sister chromatid separation, chromosome decondensation, reformation of the nuclear envelope and cytokinesis. Phosphorylates KRT5 during prometaphase and metaphase. Inactivated by PKR/EIF2AK2- and WEE1-mediated phosphorylation upon DNA damage to stop cell cycle and genome replication at the G2 checkpoint thus facilitating DNA repair. Reactivated after successful DNA repair through WIP1-dependent signaling leading to CDC25A/B/C-mediated dephosphorylation and restoring cell cycle progression. Catalyzes lamin (LMNA, LMNB1 and LMNB2) phosphorylation at the onset of mitosis, promoting nuclear envelope breakdown. In proliferating cells, CDK1-mediated FOXO1 phosphorylation at the G2-M phase represses FOXO1 interaction with 14-3-3 proteins and thereby promotes FOXO1 nuclear accumulation and transcription factor activity, leading to cell death of postmitotic neurons. The phosphorylation of beta-tubulins regulates microtubule dynamics during mitosis. NEDD1 phosphorylation promotes PLK1-mediated NEDD1 phosphorylation and subsequent targeting of the gamma-tubulin ring complex (gTuRC) to the centrosome, an important step for spindle formation. In addition, CC2D1A phosphorylation regulates CC2D1A spindle pole localization and association with SCC1/RAD21 and centriole cohesion during mitosis. The phosphorylation of Bcl-xL/BCL2L1 after prolongated G2 arrest upon DNA damage triggers apoptosis. In contrast, CASP8 phosphorylation during mitosis prevents its activation by proteolysis and subsequent apoptosis. This phosphorylation occurs in cancer cell lines, as well as in primary breast tissues and lymphocytes. EZH2 phosphorylation promotes H3K27me3 maintenance and epigenetic gene silencing. CALD1 phosphorylation promotes Schwann cell migration during peripheral nerve regeneration. CDK1-cyclin-B complex phosphorylates NCKAP5L and mediates its dissociation from centrosomes during mitosis. Regulates the amplitude of the cyclic expression of the core clock gene BMAL1 by phosphorylating its transcriptional repressor NR1D1, and this phosphorylation is necessary for SCF(FBXW7)-mediated ubiquitination and proteasomal degradation of NR1D1. Phosphorylates EML3 at 'Thr-881' which is essential for its interaction with HAUS augmin-like complex and TUBG1. Phosphorylates CGAS during mitosis, leading to its inhibition, thereby preventing CGAS activation by self DNA during mitosis. Phosphorylates SKA3 during mitosis which promotes SKA3 binding to the NDC80 complex and anchoring of the SKA complex to kinetochores, to enable stable attachment of mitotic spindle microtubules to kinetochores. This is Cyclin-dependent kinase 1 (Cdk1) from Rattus norvegicus (Rat).